A 239-amino-acid polypeptide reads, in one-letter code: 7-cyano-7-deazaguanine synthase (239 aa).

7 to 17 (LSGGIDSSTLL) contacts ATP. Zn(2+) contacts are provided by C184, C192, C195, and C198.

It belongs to the QueC family. Zn(2+) serves as cofactor.

The enzyme catalyses 7-carboxy-7-deazaguanine + NH4(+) + ATP = 7-cyano-7-deazaguanine + ADP + phosphate + H2O + H(+). It participates in purine metabolism; 7-cyano-7-deazaguanine biosynthesis. In terms of biological role, catalyzes the ATP-dependent conversion of 7-carboxy-7-deazaguanine (CDG) to 7-cyano-7-deazaguanine (preQ(0)). This is 7-cyano-7-deazaguanine synthase from Archaeoglobus fulgidus (strain ATCC 49558 / DSM 4304 / JCM 9628 / NBRC 100126 / VC-16).